We begin with the raw amino-acid sequence, 284 residues long: Mevalonate kinase (284 aa).

86–96 (PIGSGLGSSAA) lines the ATP pocket. Asp137 serves as the catalytic Proton acceptor.

This sequence belongs to the GHMP kinase family. Mevalonate kinase subfamily. Homodimer. Mg(2+) is required as a cofactor.

It is found in the cytoplasm. The catalysed reaction is (R)-mevalonate + ATP = (R)-5-phosphomevalonate + ADP + H(+). The protein operates within isoprenoid biosynthesis; isopentenyl diphosphate biosynthesis via mevalonate pathway; isopentenyl diphosphate from (R)-mevalonate: step 1/3. In terms of biological role, catalyzes the phosphorylation of (R)-mevalonate (MVA) to (R)-mevalonate 5-phosphate (MVAP). Functions in the mevalonate (MVA) pathway leading to isopentenyl diphosphate (IPP), a key precursor for the biosynthesis of isoprenoid compounds such as archaeal membrane lipids. This is Mevalonate kinase from Archaeoglobus fulgidus (strain ATCC 49558 / DSM 4304 / JCM 9628 / NBRC 100126 / VC-16).